Reading from the N-terminus, the 202-residue chain is ATP-dependent Clp protease proteolytic subunit (202 aa).

Ser98 (nucleophile) is an active-site residue. His123 is an active-site residue.

It belongs to the peptidase S14 family. In terms of assembly, fourteen ClpP subunits assemble into 2 heptameric rings which stack back to back to give a disk-like structure with a central cavity, resembling the structure of eukaryotic proteasomes.

The protein localises to the cytoplasm. The catalysed reaction is Hydrolysis of proteins to small peptides in the presence of ATP and magnesium. alpha-casein is the usual test substrate. In the absence of ATP, only oligopeptides shorter than five residues are hydrolyzed (such as succinyl-Leu-Tyr-|-NHMec, and Leu-Tyr-Leu-|-Tyr-Trp, in which cleavage of the -Tyr-|-Leu- and -Tyr-|-Trp bonds also occurs).. In terms of biological role, cleaves peptides in various proteins in a process that requires ATP hydrolysis. Has a chymotrypsin-like activity. Plays a major role in the degradation of misfolded proteins. This Desulfovibrio desulfuricans (strain ATCC 27774 / DSM 6949 / MB) protein is ATP-dependent Clp protease proteolytic subunit.